Consider the following 631-residue polypeptide: tRNA uridine 5-carboxymethylaminomethyl modification enzyme MnmG (631 aa).

Residues 13-18, V125, and S180 contribute to the FAD site; that span reads GGGHAG. Residue 273 to 287 participates in NAD(+) binding; sequence GPRYCPSIEDKVMRF. Q370 contributes to the FAD binding site.

This sequence belongs to the MnmG family. In terms of assembly, homodimer. Heterotetramer of two MnmE and two MnmG subunits. FAD serves as cofactor.

It localises to the cytoplasm. NAD-binding protein involved in the addition of a carboxymethylaminomethyl (cmnm) group at the wobble position (U34) of certain tRNAs, forming tRNA-cmnm(5)s(2)U34. In Vibrio campbellii (strain ATCC BAA-1116), this protein is tRNA uridine 5-carboxymethylaminomethyl modification enzyme MnmG.